The sequence spans 85 residues: Small ribosomal subunit protein uS17 (85 aa).

This sequence belongs to the universal ribosomal protein uS17 family. In terms of assembly, part of the 30S ribosomal subunit.

In terms of biological role, one of the primary rRNA binding proteins, it binds specifically to the 5'-end of 16S ribosomal RNA. In Citrifermentans bemidjiense (strain ATCC BAA-1014 / DSM 16622 / JCM 12645 / Bem) (Geobacter bemidjiensis), this protein is Small ribosomal subunit protein uS17.